The sequence spans 152 residues: Nucleoside diphosphate kinase (152 aa).

6 residues coordinate ATP: Lys-11, Phe-59, Arg-87, Thr-93, Arg-104, and Asn-114. Residue His-117 is the Pros-phosphohistidine intermediate of the active site.

It belongs to the NDK family. As to quaternary structure, homotetramer. Mg(2+) serves as cofactor.

It localises to the cytoplasm. The catalysed reaction is a 2'-deoxyribonucleoside 5'-diphosphate + ATP = a 2'-deoxyribonucleoside 5'-triphosphate + ADP. It catalyses the reaction a ribonucleoside 5'-diphosphate + ATP = a ribonucleoside 5'-triphosphate + ADP. In terms of biological role, major role in the synthesis of nucleoside triphosphates other than ATP. The ATP gamma phosphate is transferred to the NDP beta phosphate via a ping-pong mechanism, using a phosphorylated active-site intermediate. In Prochlorococcus marinus (strain MIT 9312), this protein is Nucleoside diphosphate kinase.